A 499-amino-acid chain; its full sequence is Cytochrome P450 11B1, mitochondrial (499 aa).

Residues 1-24 (MALRVTADVWLARPWQCLHRTRAL) constitute a mitochondrion transit peptide. A heme-binding site is contributed by cysteine 446.

It belongs to the cytochrome P450 family. Requires heme as cofactor. In terms of tissue distribution, adrenal zona fasciculata/reticularis.

The protein resides in the mitochondrion inner membrane. It catalyses the reaction a steroid + 2 reduced [adrenodoxin] + O2 + 2 H(+) = an 11beta-hydroxysteroid + 2 oxidized [adrenodoxin] + H2O. It carries out the reaction 21-hydroxyprogesterone + 2 reduced [adrenodoxin] + O2 + 2 H(+) = corticosterone + 2 oxidized [adrenodoxin] + H2O. The enzyme catalyses 21-hydroxyprogesterone + 2 reduced [adrenodoxin] + O2 + 2 H(+) = 18-hydroxy-11-deoxycorticosterone + 2 oxidized [adrenodoxin] + H2O. The catalysed reaction is 21-hydroxyprogesterone + 2 reduced [adrenodoxin] + O2 + 2 H(+) = 19-hydroxy-11-deoxycorticosterone + 2 oxidized [adrenodoxin] + H2O. It catalyses the reaction 11-deoxycortisol + 2 reduced [adrenodoxin] + O2 + 2 H(+) = cortisol + 2 oxidized [adrenodoxin] + H2O. It carries out the reaction cortisol + 2 reduced [adrenodoxin] + O2 + 2 H(+) = 18-hydroxycortisol + 2 oxidized [adrenodoxin] + H2O. The enzyme catalyses 11-deoxycortisol + 2 reduced [adrenodoxin] + O2 + 2 H(+) = 18-hydroxy-11-deoxycortisol + 2 oxidized [adrenodoxin] + H2O. The protein operates within steroid biosynthesis; glucocorticoid biosynthesis. Its pathway is steroid hormone biosynthesis. In terms of biological role, a cytochrome P450 monooxygenase involved in the biosynthesis of adrenal corticoids. Catalyzes a variety of reactions that are essential for many species, including detoxification, defense, and the formation of endogenous chemicals like steroid hormones. Steroid 11beta, 18- and 19-hydroxylase with preferred regioselectivity at 11beta, then 18, and lastly 19. Catalyzes the hydroxylation of 11-deoxycortisol and 11-deoxycorticosterone (21-hydroxyprogesterone) at 11beta position, yielding cortisol or corticosterone, respectively, but cannot produce aldosterone. Mechanistically, uses molecular oxygen inserting one oxygen atom into a substrate for hydroxylation and reducing the second into a water molecule. Two electrons are provided by NADPH via a two-protein mitochondrial transfer system comprising flavoprotein FDXR (adrenodoxin/ferredoxin reductase) and nonheme iron-sulfur protein FDX1 or FDX2 (adrenodoxin/ferredoxin). Due to its lack of 18-oxidation activity, it is incapable of generating aldosterone. Could also be involved in the androgen metabolic pathway. The polypeptide is Cytochrome P450 11B1, mitochondrial (Cyp11b1) (Rattus norvegicus (Rat)).